The sequence spans 240 residues: MKQVRFLPQPARRARAAAARRPGAAALAAAALALAGCAQIPREPITQQPMSAMPPMPPAMQAPGSIYNPGYAGRPLFEDQRPRNVGDILTIVIAENINATKSSGANTNRQGNTSFDVPTAGFLGGLFNKANLSAQGANKFAATGGASAANTFNGTITVTVTNVLPNGNLVVSGEKQMLINQGNEFVRFSGIVNPNTISGQNSVYSTQVADARIEYSAKGYINEAETMGWLQRFFLNIAPW.

A signal peptide spans 1–35; the sequence is MKQVRFLPQPARRARAAAARRPGAAALAAAALALA.

The protein belongs to the FlgH family. In terms of assembly, the basal body constitutes a major portion of the flagellar organelle and consists of four rings (L,P,S, and M) mounted on a central rod.

It is found in the cell outer membrane. The protein localises to the bacterial flagellum basal body. Functionally, assembles around the rod to form the L-ring and probably protects the motor/basal body from shearing forces during rotation. This chain is Flagellar L-ring protein (flgH), found in Burkholderia pseudomallei (strain K96243).